The chain runs to 172 residues: C-phycocyanin-2 beta subunit (172 aa).

N4-methylasparagine is present on N72. 2 residues coordinate (2R,3E)-phycocyanobilin: C82 and C153.

The protein belongs to the phycobiliprotein family. In terms of assembly, heterodimer of an alpha and a beta subunit, which further assembles into trimers and the trimers into hexamers. In terms of processing, contains two covalently linked bilin chromophores.

The protein resides in the cellular thylakoid membrane. In terms of biological role, light-harvesting photosynthetic bile pigment-protein from the phycobiliprotein complex (phycobilisome, PBS). Phycocyanin is the major phycobiliprotein in the PBS rod. This chain is C-phycocyanin-2 beta subunit (cpcB2), found in Microchaete diplosiphon (Fremyella diplosiphon).